Consider the following 160-residue polypeptide: Phosphopantetheine adenylyltransferase (160 aa).

Ser-10 provides a ligand contact to substrate. Residues 10 to 11 (SF) and His-18 each bind ATP. Substrate-binding residues include Lys-42, Thr-74, and Arg-88. ATP-binding positions include 89 to 91 (GLR), Glu-99, and 124 to 130 (YSFISST).

The protein belongs to the bacterial CoaD family. In terms of assembly, homohexamer. The cofactor is Mg(2+).

The protein localises to the cytoplasm. It catalyses the reaction (R)-4'-phosphopantetheine + ATP + H(+) = 3'-dephospho-CoA + diphosphate. It functions in the pathway cofactor biosynthesis; coenzyme A biosynthesis; CoA from (R)-pantothenate: step 4/5. Functionally, reversibly transfers an adenylyl group from ATP to 4'-phosphopantetheine, yielding dephospho-CoA (dPCoA) and pyrophosphate. The chain is Phosphopantetheine adenylyltransferase from Leptospira interrogans serogroup Icterohaemorrhagiae serovar copenhageni (strain Fiocruz L1-130).